A 907-amino-acid chain; its full sequence is Probable dipeptidyl-aminopeptidase B (907 aa).

The segment covering 1–11 has biased composition (basic and acidic residues); sequence MYDQVPYRDTD. Residues 1-71 form a disordered region; the sequence is MYDQVPYRDT…RGKPDEDDDL (71 aa). Over 1-88 the chain is Cytoplasmic; sequence MYDQVPYRDT…LKPMERKVRR (88 aa). A compositionally biased stretch (low complexity) spans 22-36; that stretch reads SDSNRSSIDTTSTTS. A helical; Signal-anchor for type II membrane protein transmembrane segment spans residues 89 to 109; the sequence is AMYLLAFLMIGGWFLALAVYV. At 110–907 the chain is on the vacuolar side; that stretch reads SREHFGTPDT…PLRKRNRELV (798 aa). N-linked (GlcNAc...) asparagine glycosylation is found at N185 and N341. The active-site Charge relay system is the S746. An N-linked (GlcNAc...) asparagine glycan is attached at N800. Catalysis depends on charge relay system residues D823 and H856.

The protein belongs to the peptidase S9B family.

Its subcellular location is the vacuole membrane. The enzyme catalyses Release of an N-terminal dipeptide, Xaa-Yaa-|-Zaa-, from a polypeptide, preferentially when Yaa is Pro, provided Zaa is neither Pro nor hydroxyproline.. Its function is as follows. Type IV dipeptidyl-peptidase which removes N-terminal dipeptides sequentially from polypeptides having unsubstituted N-termini provided that the penultimate residue is proline. The polypeptide is Probable dipeptidyl-aminopeptidase B (DAPB) (Tuber melanosporum (strain Mel28) (Perigord black truffle)).